The following is a 478-amino-acid chain: CDK5 and ABL1 enzyme substrate 2 (478 aa).

Positions M1–R121 are disordered. Residues G11 to A24 are compositionally biased toward pro residues. Residues P25–A35 are compositionally biased toward low complexity. Positions L36–Q46 are enriched in basic residues. Pro residues predominate over residues E69 to G92. Residues S130 and S208 each carry the phosphoserine modification. Residues S257–D296 form a disordered region.

It belongs to the cyclin family. In terms of assembly, binds to CDK3, CDK5 and ABL1. The C-terminal cyclin-box-like region binds to CDK5.

In terms of biological role, unknown. Probably involved in G1-S cell cycle transition. This chain is CDK5 and ABL1 enzyme substrate 2 (CABLES2), found in Homo sapiens (Human).